The primary structure comprises 289 residues: ADP-dependent (S)-NAD(P)H-hydrate dehydratase (289 aa).

The YjeF C-terminal domain maps to 9 to 286 (VTAAALRAQP…PEVPGILDRL (278 aa)). 2 residues coordinate (6S)-NADPHX: Ala-44 and His-160. AMP is bound by residues 197-201 (KGADS) and Gly-226. Residue Asp-227 participates in (6S)-NADPHX binding.

The protein belongs to the NnrD/CARKD family. In terms of assembly, homotetramer. Requires Mg(2+) as cofactor.

The catalysed reaction is (6S)-NADHX + ADP = AMP + phosphate + NADH + H(+). It catalyses the reaction (6S)-NADPHX + ADP = AMP + phosphate + NADPH + H(+). Catalyzes the dehydration of the S-form of NAD(P)HX at the expense of ADP, which is converted to AMP. Together with NAD(P)HX epimerase, which catalyzes the epimerization of the S- and R-forms, the enzyme allows the repair of both epimers of NAD(P)HX, a damaged form of NAD(P)H that is a result of enzymatic or heat-dependent hydration. The polypeptide is ADP-dependent (S)-NAD(P)H-hydrate dehydratase (Xanthomonas campestris pv. campestris (strain ATCC 33913 / DSM 3586 / NCPPB 528 / LMG 568 / P 25)).